Here is a 232-residue protein sequence, read N- to C-terminus: DnaJ homolog subfamily B member 8 (232 aa).

The region spanning 3–69 (NYYEVLGVQA…KKRSLYDRAG (67 aa)) is the J domain.

As to quaternary structure, interacts with histone deacetylases HDAC4, HDAC6, and SIRT2, HDAC activity is required for antiaggregation.

In terms of biological role, efficient suppressor of aggregation and toxicity of disease-associated polyglutamine proteins. This is DnaJ homolog subfamily B member 8 (DNAJB8) from Homo sapiens (Human).